We begin with the raw amino-acid sequence, 1998 residues long: Histone acetyltransferase KAT6A (1998 aa).

An SAMD1-like winged helix (WH) domain is found at 1–77 (MVKLANPLYT…LNSYKDPDNP (77 aa)). The segment at 1-144 (MVKLANPLYT…CGGTAASGFH (144 aa)) is required for activation of RUNX1-1. Residues 52 to 166 (ELSVKDGTIL…HGRLLKDGPL (115 aa)) are required for nuclear localization. Residues 72-93 (KDPDNPGRIALPKPRNHGKLDN) are disordered. One can recognise an H15 domain in the interval 95-171 (QSVDWNKLLK…KDGPLYRLNT (77 aa)). The interval 144-662 (HQQLRLAIKR…RKGYGRFLID (519 aa)) is interaction with PML. K172 bears the N6-acetyllysine mark. 2 consecutive PHD-type zinc fingers follow at residues 199-258 (DKPV…LRWQ) and 255-306 (LRWQ…GMWI). The segment at 312 to 662 (PRKKGRKLLQ…RKGYGRFLID (351 aa)) is interaction with RUNX1-1. Positions 336-377 (GRPKNRLKKQSTVSKGPFSKVRTGPGRGRKRKITVSSQSASS) are disordered. Residues K350 and K355 each carry the N6-acetyllysine modification. At T369 the chain carries Phosphothreonine; by PKB/AKT1. The residue at position 419 (S419) is a Phosphoserine. The segment at 440–464 (KGNRKSSTSHWPTDNQDGWESKQES) is disordered. A compositionally biased stretch (polar residues) spans 444–457 (KSSTSHWPTDNQDG). S471 carries the post-translational modification Phosphoserine. Residues 486 to 776 (IQEQALQKVG…VDPECLRWTP (291 aa)) form a catalytic region. The MYST-type HAT domain occupies 502–776 (PQVRCPSVIE…VDPECLRWTP (275 aa)). The segment at 505 to 808 (RCPSVIEFGK…EPQGQERELE (304 aa)) is mediates interaction with BRPF1, required for histone H3 acetyltransferase activity. The segment at 535–560 (LYLCEFCLKYMKSRTILQQHMKKCGW) adopts a C2HC MYST-type zinc-finger fold. Residue K602 is modified to N6-acetyllysine; by autocatalysis. Residues 643–647 (SCIMI) and 652–658 (QRKGYGR) contribute to the acetyl-CoA site. Catalysis depends on E678, which acts as the Proton donor/acceptor. S682 contributes to the acetyl-CoA binding site. A disordered region spans residues 783-947 (VVSEEEDEEA…RFSESADLWR (165 aa)). Residue S785 is modified to Phosphoserine. Positions 785–797 (SEEEDEEADDGEK) are enriched in acidic residues. The segment covering 798 to 840 (EEPQGQERELETRERVGKSVSRENKDQDSSSLIESEKKPEVKE) has biased composition (basic and acidic residues). The residue at position 815 (K815) is an N6-acetyllysine. K835 is covalently cross-linked (Glycyl lysine isopeptide (Lys-Gly) (interchain with G-Cter in SUMO2)). Positions 865-874 (RRGRCGRKNR) are enriched in basic residues. Positions 875–886 (KTQERFGDKDSK) are enriched in basic and acidic residues. A Phosphotyrosine modification is found at Y900. The segment covering 903–916 (CEEKSAASRERYTE) has biased composition (basic and acidic residues). S940 and S953 each carry phosphoserine. The disordered stretch occupies residues 982–1079 (GFSESSEEEE…EEEEDENELF (98 aa)). K1006 is modified (N6-acetyllysine). The span at 1008–1029 (TLKRKKPILHRRRRVRKRKHHN) shows a compositional bias: basic residues. A compositionally biased stretch (low complexity) spans 1030–1041 (SSVVTETISETT). Composition is skewed to acidic residues over residues 1042–1052 (EVLDEPFEDSD) and 1064–1077 (FEIE…DENE). Phosphoserine occurs at positions 1088, 1089, and 1114. 4 disordered regions span residues 1096–1175 (QASS…PGFK), 1195–1436 (PIKP…EGAY), 1450–1567 (QSYT…STMG), and 1630–1702 (TCVV…CSMN). Acidic residues predominate over residues 1106–1119 (DEEEEEEESDDADD). A compositionally biased stretch (polar residues) spans 1135 to 1146 (NSASLEPDTSTP). Residues 1147–1173 (MKKKKGWPKGKSRKPIHWKKRPGRKPG) show a composition bias toward basic residues. Residues 1203–1228 (RTQESEELVEVKEGLVEERKEEMHTE) show a composition bias toward basic and acidic residues. Composition is skewed to acidic residues over residues 1229–1240 (ADEEAEEEEDAA) and 1281–1298 (EEPQ…DEVT). Basic and acidic residues-rich tracts occupy residues 1316–1333 (HLDS…ARED), 1351–1360 (DSRENAKDKD), and 1392–1413 (DSNT…HSEL). A compositionally biased stretch (low complexity) spans 1472 to 1496 (HNSPISSIPSHPSQSVRSVSSPSMP). Positions 1501 to 1522 (GYTQISPEQGSLSAPSMQNMET) are enriched in polar residues. An interaction with RUNX1-2 region spans residues 1510 to 1635 (GSLSAPSMQN…KSPQTCVVER (126 aa)). Residues 1510 to 1735 (GSLSAPSMQN…YERIPGDFGA (226 aa)) form an interaction with PML region. The segment covering 1527–1541 (DVPSVSDHSQQVVDS) has biased composition (low complexity). A compositionally biased stretch (polar residues) spans 1549-1567 (IESTTENYENPSSYDSTMG). 2 stretches are compositionally biased toward pro residues: residues 1639-1658 (NQQP…PQPQ) and 1665-1693 (PQPP…PQQQ). The tract at residues 1907–1942 (SMNMNTLNAMNSYRMTQPMMNSSYHSNPAYMNQTAQ) is required for activation of RUNX1-2.

The protein belongs to the MYST (SAS/MOZ) family. As to quaternary structure, component of the MOZ/MORF complex composed at least of ING5, KAT6A, KAT6B, MEAF6 and one of BRPF1, BRD1/BRPF2 and BRPF3. Interacts with RUNX1; phosphorylation of RUNX1 enhances the interaction. Interacts with RUNX2. Interacts with p53/TP53. Interacts with PML and this interaction positively regulates its acetylation activity towards p53/TP53. In terms of processing, autoacetylated. Autoacetylation at Lys-602 is required for proper function. Phosphorylation at Thr-369 by PKB/AKT1 inhibits its interaction with PML and negatively regulates its acetylation activity towards p53/TP53.

The protein resides in the nucleus. The protein localises to the nucleolus. It is found in the nucleoplasm. It localises to the PML body. The catalysed reaction is L-lysyl-[protein] + acetyl-CoA = N(6)-acetyl-L-lysyl-[protein] + CoA + H(+). Functionally, histone acetyltransferase that acetylates lysine residues in histone H3 and histone H4 (in vitro). Component of the MOZ/MORF complex which has a histone H3 acetyltransferase activity. May act as a transcriptional coactivator for RUNX1 and RUNX2. Acetylates p53/TP53 at 'Lys-120' and 'Lys-382' and controls its transcriptional activity via association with PML. This Rattus norvegicus (Rat) protein is Histone acetyltransferase KAT6A (Kat6a).